The following is a 512-amino-acid chain: Probable capsid protein 4 (512 aa).

The protein belongs to the NCLDV major capsid protein family.

The protein localises to the virion. The protein is Probable capsid protein 4 of Acanthamoeba polyphaga mimivirus (APMV).